Reading from the N-terminus, the 692-residue chain is Elongation factor G (692 aa).

One can recognise a tr-type G domain in the interval 8-283 (NRIRNIGIAA…AVIDYLPAPT (276 aa)). GTP-binding positions include 17–24 (AHIDAGKT), 81–85 (DTPGH), and 135–138 (NKMD).

This sequence belongs to the TRAFAC class translation factor GTPase superfamily. Classic translation factor GTPase family. EF-G/EF-2 subfamily.

The protein resides in the cytoplasm. Catalyzes the GTP-dependent ribosomal translocation step during translation elongation. During this step, the ribosome changes from the pre-translocational (PRE) to the post-translocational (POST) state as the newly formed A-site-bound peptidyl-tRNA and P-site-bound deacylated tRNA move to the P and E sites, respectively. Catalyzes the coordinated movement of the two tRNA molecules, the mRNA and conformational changes in the ribosome. The polypeptide is Elongation factor G (Helicobacter acinonychis (strain Sheeba)).